A 333-amino-acid chain; its full sequence is Probable malate dehydrogenase 3 (333 aa).

NAD(+) is bound at residue Gly-12–Ala-18. The substrate site is built by Arg-93 and Arg-99. NAD(+)-binding positions include Asn-106, Gln-113, and Val-130–Asn-132. Substrate-binding residues include Asn-132 and Arg-163. His-188 acts as the Proton acceptor in catalysis.

This sequence belongs to the LDH/MDH superfamily. MDH type 2 family. Homodimer.

It carries out the reaction (S)-malate + NAD(+) = oxaloacetate + NADH + H(+). Functionally, catalyzes the reversible oxidation of malate to oxaloacetate. In Dictyostelium discoideum (Social amoeba), this protein is Probable malate dehydrogenase 3 (mdhC).